The primary structure comprises 125 residues: Barwin (125 aa).

A Pyrrolidone carboxylic acid modification is found at Gln-1. The Barwin domain occupies Gln-1 to Asp-125. 3 disulfide bridges follow: Cys-31/Cys-63, Cys-52/Cys-86, and Cys-66/Cys-123.

Functionally, may be involved in a defense mechanism. Probable plant lectin. Binds weakly a chitin analog. The sequence is that of Barwin from Hordeum vulgare (Barley).